The primary structure comprises 261 residues: Imidazole glycerol phosphate synthase subunit HisF (261 aa).

Active-site residues include D11 and D130.

This sequence belongs to the HisA/HisF family. Heterodimer of HisH and HisF.

It is found in the cytoplasm. It carries out the reaction 5-[(5-phospho-1-deoxy-D-ribulos-1-ylimino)methylamino]-1-(5-phospho-beta-D-ribosyl)imidazole-4-carboxamide + L-glutamine = D-erythro-1-(imidazol-4-yl)glycerol 3-phosphate + 5-amino-1-(5-phospho-beta-D-ribosyl)imidazole-4-carboxamide + L-glutamate + H(+). Its pathway is amino-acid biosynthesis; L-histidine biosynthesis; L-histidine from 5-phospho-alpha-D-ribose 1-diphosphate: step 5/9. IGPS catalyzes the conversion of PRFAR and glutamine to IGP, AICAR and glutamate. The HisF subunit catalyzes the cyclization activity that produces IGP and AICAR from PRFAR using the ammonia provided by the HisH subunit. This Limosilactobacillus fermentum (strain NBRC 3956 / LMG 18251) (Lactobacillus fermentum) protein is Imidazole glycerol phosphate synthase subunit HisF.